The primary structure comprises 187 residues: UPF0232 protein MMAR_0004 (187 aa).

Disordered stretches follow at residues 1 to 77 (MSDD…QPLG) and 166 to 187 (ASPSWRKGPRHIAGRGPRDTYG). Positions 14–30 (AARDELSGMDLVRRTLA) are enriched in basic and acidic residues. Over residues 31–55 (EARAAARARGQDPGRGFAAGPAPRR) the composition is skewed to low complexity.

The protein belongs to the UPF0232 family.

The chain is UPF0232 protein MMAR_0004 from Mycobacterium marinum (strain ATCC BAA-535 / M).